The following is a 426-amino-acid chain: Zinc finger protein 662 (426 aa).

Positions Met-1–Ala-44 constitute a KRAB domain. 8 C2H2-type zinc fingers span residues Tyr-192 to His-214, Tyr-220 to His-242, Tyr-248 to His-270, Phe-276 to His-298, Tyr-304 to His-326, Tyr-332 to His-354, His-360 to His-382, and Tyr-388 to His-410.

Belongs to the krueppel C2H2-type zinc-finger protein family.

The protein resides in the nucleus. Its function is as follows. May be involved in transcriptional regulation. The protein is Zinc finger protein 662 (ZNF662) of Homo sapiens (Human).